The sequence spans 759 residues: uncharacterized protein (759 aa).

Disordered regions lie at residues 1–31 (MDGN…TSFQ) and 188–211 (NDEG…PFAN). The span at 17-31 (LSPLQTSFPSSTSFQ) shows a compositional bias: low complexity. Positions 189 to 207 (DEGEDVKDNEQDDNIDESD) are enriched in acidic residues. 10 helical membrane passes run 434 to 454 (YFRT…ILPM), 456 to 476 (FQGG…VGIL), 486 to 505 (MYNS…LSRA), 517 to 537 (FCFS…YIVL), 555 to 575 (MFYA…GAAL), 597 to 617 (DKWK…VNQA), 620 to 640 (SQWP…YFTA), 643 to 663 (FGSN…LGNI), 670 to 690 (GVAF…GLAA), and 726 to 746 (LVMV…ALVV).

This sequence belongs to the ThrE exporter (TC 2.A.79) family.

The protein localises to the endoplasmic reticulum membrane. This is an uncharacterized protein from Schizosaccharomyces pombe (strain 972 / ATCC 24843) (Fission yeast).